A 196-amino-acid chain; its full sequence is Putative NADH dehydrogenase/NAD(P)H nitroreductase SCO5049 (196 aa).

It belongs to the nitroreductase family. HadB/RutE subfamily. The cofactor is FMN.

The sequence is that of Putative NADH dehydrogenase/NAD(P)H nitroreductase SCO5049 from Streptomyces coelicolor (strain ATCC BAA-471 / A3(2) / M145).